The following is a 441-amino-acid chain: Cysteine--tRNA ligase (441 aa).

A Zn(2+)-binding site is contributed by C24. The short motif at 26–36 (PTVYNYIHIGN) is the 'HIGH' region element. Positions 204, 230, and 234 each coordinate Zn(2+). Residues 262–266 (KMSKS) carry the 'KMSKS' region motif. Position 265 (K265) interacts with ATP.

Belongs to the class-I aminoacyl-tRNA synthetase family. In terms of assembly, monomer. The cofactor is Zn(2+).

The protein localises to the cytoplasm. It catalyses the reaction tRNA(Cys) + L-cysteine + ATP = L-cysteinyl-tRNA(Cys) + AMP + diphosphate. This Mycoplasma capricolum subsp. capricolum (strain California kid / ATCC 27343 / NCTC 10154) protein is Cysteine--tRNA ligase.